Here is a 513-residue protein sequence, read N- to C-terminus: GMP synthase [glutamine-hydrolyzing] (513 aa).

Positions 5-195 constitute a Glutamine amidotransferase type-1 domain; sequence LVLVIDFGGQ…VYNICGCTGD (191 aa). The active-site Nucleophile is Cys82. Active-site residues include His169 and Glu171. Residues 196–388 enclose the GMPS ATP-PPase domain; sequence WKMDSFVEKT…LGIPEKLVFR (193 aa). 223-229 contributes to the ATP binding site; sequence SGGVDSS.

In terms of assembly, homodimer.

The enzyme catalyses XMP + L-glutamine + ATP + H2O = GMP + L-glutamate + AMP + diphosphate + 2 H(+). The protein operates within purine metabolism; GMP biosynthesis; GMP from XMP (L-Gln route): step 1/1. Functionally, catalyzes the synthesis of GMP from XMP. This chain is GMP synthase [glutamine-hydrolyzing], found in Clostridium botulinum (strain Alaska E43 / Type E3).